We begin with the raw amino-acid sequence, 327 residues long: Interleukin-12 subunit beta (327 aa).

An N-terminal signal peptide occupies residues 1 to 22 (MHPQQLVVSWFSLVLLASPIVA). The Ig-like C2-type domain occupies 23 to 106 (IWELEKNVYI…LSRSLLLLHK (84 aa)). Residues Cys-50 and Cys-90 are joined by a disulfide bond. Residue Asn-223 is glycosylated (N-linked (GlcNAc...) asparagine). The region spanning 238–327 (PPKNLQLKPL…WSEWASVSCS (90 aa)) is the Fibronectin type-III domain.

The protein belongs to the IL-12B family. Heterodimer with IL12A; disulfide-linked. The heterodimer is known as interleukin IL-12. Heterodimer with IL23A; disulfide-linked. The heterodimer is known as interleukin IL-23. Also secreted as a monomer. Interacts with NBR1; this interaction promotes IL-12 secretion.

Its function is as follows. Cytokine that can act as a growth factor for activated T and NK cells, enhance the lytic activity of NK/lymphokine-activated killer cells, and stimulate the production of IFN-gamma by resting PBMC. Associates with IL23A to form the IL-23 interleukin, a heterodimeric cytokine which functions in innate and adaptive immunity. IL-23 may constitute with IL-17 an acute response to infection in peripheral tissues. IL-23 binds to a heterodimeric receptor complex composed of IL12RB1 and IL23R, activates the Jak-Stat signaling cascade, stimulates memory rather than naive T-cells and promotes production of pro-inflammatory cytokines. IL-23 induces autoimmune inflammation and thus may be responsible for autoimmune inflammatory diseases and may be important for tumorigenesis. This chain is Interleukin-12 subunit beta (IL12B), found in Bubalus bubalis (Domestic water buffalo).